The chain runs to 482 residues: 3-isopropylmalate dehydratase large subunit (482 aa).

Residues Cys-353, Cys-414, and Cys-417 each coordinate [4Fe-4S] cluster.

The protein belongs to the aconitase/IPM isomerase family. LeuC type 1 subfamily. As to quaternary structure, heterodimer of LeuC and LeuD. The cofactor is [4Fe-4S] cluster.

It catalyses the reaction (2R,3S)-3-isopropylmalate = (2S)-2-isopropylmalate. The protein operates within amino-acid biosynthesis; L-leucine biosynthesis; L-leucine from 3-methyl-2-oxobutanoate: step 2/4. Functionally, catalyzes the isomerization between 2-isopropylmalate and 3-isopropylmalate, via the formation of 2-isopropylmaleate. This is 3-isopropylmalate dehydratase large subunit from Xanthomonas oryzae pv. oryzae (strain MAFF 311018).